A 78-amino-acid chain; its full sequence is Large ribosomal subunit protein bL28 (78 aa).

Belongs to the bacterial ribosomal protein bL28 family.

In Pseudomonas aeruginosa (strain LESB58), this protein is Large ribosomal subunit protein bL28.